The primary structure comprises 869 residues: Protein translocase subunit SecA (869 aa).

ATP-binding positions include Gln-85, 103–107, and Asp-508; that span reads GEGKT.

The protein belongs to the SecA family. As to quaternary structure, monomer and homodimer. Part of the essential Sec protein translocation apparatus which comprises SecA, SecYEG and auxiliary proteins SecDF. Other proteins may also be involved.

The protein resides in the cell membrane. Its subcellular location is the cytoplasm. The enzyme catalyses ATP + H2O + cellular proteinSide 1 = ADP + phosphate + cellular proteinSide 2.. Part of the Sec protein translocase complex. Interacts with the SecYEG preprotein conducting channel. Has a central role in coupling the hydrolysis of ATP to the transfer of proteins into and across the cell membrane, serving as an ATP-driven molecular motor driving the stepwise translocation of polypeptide chains across the membrane. The polypeptide is Protein translocase subunit SecA (Deinococcus deserti (strain DSM 17065 / CIP 109153 / LMG 22923 / VCD115)).